Consider the following 209-residue polypeptide: dTTP/UTP pyrophosphatase (209 aa).

D79 (proton acceptor) is an active-site residue.

It belongs to the Maf family. YhdE subfamily. Requires a divalent metal cation as cofactor.

The protein localises to the cytoplasm. It catalyses the reaction dTTP + H2O = dTMP + diphosphate + H(+). It carries out the reaction UTP + H2O = UMP + diphosphate + H(+). Nucleoside triphosphate pyrophosphatase that hydrolyzes dTTP and UTP. May have a dual role in cell division arrest and in preventing the incorporation of modified nucleotides into cellular nucleic acids. The chain is dTTP/UTP pyrophosphatase from Bradyrhizobium diazoefficiens (strain JCM 10833 / BCRC 13528 / IAM 13628 / NBRC 14792 / USDA 110).